A 761-amino-acid chain; its full sequence is Phosphoribosylformylglycinamidine synthase subunit PurL (761 aa).

The active site involves histidine 58. Residues tyrosine 61 and lysine 105 each contribute to the ATP site. A Mg(2+)-binding site is contributed by glutamate 107. Residues 108–111 (SHNH) and arginine 130 each bind substrate. Histidine 109 (proton acceptor) is an active-site residue. Aspartate 131 lines the Mg(2+) pocket. Position 259 (glutamine 259) interacts with substrate. Aspartate 287 contacts Mg(2+). 331–333 (ESQ) lines the substrate pocket. ATP is bound by residues asparagine 519 and glycine 556. Asparagine 557 serves as a coordination point for Mg(2+). Substrate is bound at residue serine 559.

Belongs to the FGAMS family. As to quaternary structure, monomer. Part of the FGAM synthase complex composed of 1 PurL, 1 PurQ and 2 PurS subunits.

It localises to the cytoplasm. It carries out the reaction N(2)-formyl-N(1)-(5-phospho-beta-D-ribosyl)glycinamide + L-glutamine + ATP + H2O = 2-formamido-N(1)-(5-O-phospho-beta-D-ribosyl)acetamidine + L-glutamate + ADP + phosphate + H(+). It participates in purine metabolism; IMP biosynthesis via de novo pathway; 5-amino-1-(5-phospho-D-ribosyl)imidazole from N(2)-formyl-N(1)-(5-phospho-D-ribosyl)glycinamide: step 1/2. In terms of biological role, part of the phosphoribosylformylglycinamidine synthase complex involved in the purines biosynthetic pathway. Catalyzes the ATP-dependent conversion of formylglycinamide ribonucleotide (FGAR) and glutamine to yield formylglycinamidine ribonucleotide (FGAM) and glutamate. The FGAM synthase complex is composed of three subunits. PurQ produces an ammonia molecule by converting glutamine to glutamate. PurL transfers the ammonia molecule to FGAR to form FGAM in an ATP-dependent manner. PurS interacts with PurQ and PurL and is thought to assist in the transfer of the ammonia molecule from PurQ to PurL. In Rhodococcus jostii (strain RHA1), this protein is Phosphoribosylformylglycinamidine synthase subunit PurL.